Reading from the N-terminus, the 1614-residue chain is Adenylate cyclase type 10 (1614 aa).

Guanylate cyclase domains follow at residues 42-179 and 293-418; these read VLMF…RLAQ and TIVF…ARMM. 2 residues coordinate Mg(2+): aspartate 47 and isoleucine 48. Residue 47-52 coordinates ATP; that stretch reads DISGFT. Lysine 95 contributes to the hydrogencarbonate binding site. Residue aspartate 99 coordinates Mg(2+). ATP is bound by residues aspartate 99 and lysine 144. 3 residues coordinate hydrogencarbonate: valine 167, arginine 176, and methionine 337. Residues valine 406 and 412–416 contribute to the ATP site; that span reads NIAAR.

It belongs to the adenylyl cyclase class-4/guanylyl cyclase family. It depends on Mg(2+) as a cofactor. The cofactor is Mn(2+). As to expression, expressed in testis.

The protein localises to the cell membrane. It localises to the cytoplasm. Its subcellular location is the cytoskeleton. The protein resides in the perinuclear region. It is found in the nucleus. The protein localises to the cell projection. It localises to the cilium. Its subcellular location is the mitochondrion. It carries out the reaction ATP = 3',5'-cyclic AMP + diphosphate. Its activity is regulated as follows. Activated by manganese or magnesium ions. In the presence of magnesium ions, the enzyme is activated by bicarbonate. Calcium mildly increases the enzyme activity, also in the presence of magnesium ions. In terms of biological role, catalyzes the formation of the signaling molecule cAMP. May function as sensor that mediates responses to changes in cellular bicarbonate and CO(2) levels. Has a critical role in mammalian spermatogenesis by producing the cAMP which regulates cAMP-responsive nuclear factors indispensable for sperm maturation in the epididymis. Induces capacitation, the maturational process that sperm undergo prior to fertilization. Involved in ciliary beat regulation. The polypeptide is Adenylate cyclase type 10 (Adcy10) (Mus musculus (Mouse)).